Reading from the N-terminus, the 707-residue chain is uncharacterized protein (707 aa).

Disordered regions lie at residues 15–122 and 667–707; these read ALAK…LESY and ESVQ…DIDE. Composition is skewed to basic and acidic residues over residues 18–32 and 40–52; these read KKND…DKGI and EGKD…DVEK. Serine 112 bears the Phosphoserine mark. Residues 659 to 700 adopt a coiled-coil conformation; the sequence is EEQRKLIRESVQQDQEHKEQMRQKKKQALKSDDIELDDLSEE. Residues 692–707 show a composition bias toward acidic residues; sequence IELDDLSEEEAEDIDE.

The protein belongs to the NOC2 family.

The protein resides in the nucleus. It localises to the nucleolus. This is an uncharacterized protein from Schizosaccharomyces pombe (strain 972 / ATCC 24843) (Fission yeast).